An 82-amino-acid chain; its full sequence is Delta-conotoxin-like CnVIA (82 aa).

An N-terminal signal peptide occupies residues 1–22 (MKLTCMMIVAVLFLTAWTFVTA). A propeptide spanning residues 23–49 (DDSRNGLENLSPKARHEMKNPEASKSN) is cleaved from the precursor. 3 disulfides stabilise this stretch: cysteine 54–cysteine 69, cysteine 61–cysteine 73, and cysteine 68–cysteine 78.

It belongs to the conotoxin O1 superfamily. Expressed by the venom duct.

Its subcellular location is the secreted. Functionally, delta-conotoxins bind to site 6 of voltage-gated sodium channels (Nav) and inhibit the inactivation process. The sequence is that of Delta-conotoxin-like CnVIA from Conus consors (Singed cone).